Here is a 363-residue protein sequence, read N- to C-terminus: Chorismate synthase (363 aa).

NADP(+) contacts are provided by R48 and R54. Residues 125–127 (RSS), 237–238 (NA), G277, 292–296 (KPTSS), and R318 each bind FMN.

Belongs to the chorismate synthase family. Homotetramer. FMNH2 serves as cofactor.

It carries out the reaction 5-O-(1-carboxyvinyl)-3-phosphoshikimate = chorismate + phosphate. The protein operates within metabolic intermediate biosynthesis; chorismate biosynthesis; chorismate from D-erythrose 4-phosphate and phosphoenolpyruvate: step 7/7. Catalyzes the anti-1,4-elimination of the C-3 phosphate and the C-6 proR hydrogen from 5-enolpyruvylshikimate-3-phosphate (EPSP) to yield chorismate, which is the branch point compound that serves as the starting substrate for the three terminal pathways of aromatic amino acid biosynthesis. This reaction introduces a second double bond into the aromatic ring system. The polypeptide is Chorismate synthase (Pseudomonas putida (strain ATCC 700007 / DSM 6899 / JCM 31910 / BCRC 17059 / LMG 24140 / F1)).